The primary structure comprises 761 residues: Phosphoribosylformylglycinamidine synthase subunit PurL (761 aa).

Residue histidine 48 is part of the active site. Residues tyrosine 51 and lysine 90 each contribute to the ATP site. Glutamate 92 contributes to the Mg(2+) binding site. Substrate-binding positions include 93–96 (SHNH) and arginine 115. Histidine 94 functions as the Proton acceptor in the catalytic mechanism. Aspartate 116 provides a ligand contact to Mg(2+). Position 239 (glutamine 239) interacts with substrate. Aspartate 267 contacts Mg(2+). 311–313 (ESQ) is a substrate binding site. Aspartate 499 and glycine 536 together coordinate ATP. Mg(2+) is bound at residue asparagine 537. Serine 539 lines the substrate pocket.

It belongs to the FGAMS family. As to quaternary structure, monomer. Part of the FGAM synthase complex composed of 1 PurL, 1 PurQ and 2 PurS subunits.

It is found in the cytoplasm. It carries out the reaction N(2)-formyl-N(1)-(5-phospho-beta-D-ribosyl)glycinamide + L-glutamine + ATP + H2O = 2-formamido-N(1)-(5-O-phospho-beta-D-ribosyl)acetamidine + L-glutamate + ADP + phosphate + H(+). Its pathway is purine metabolism; IMP biosynthesis via de novo pathway; 5-amino-1-(5-phospho-D-ribosyl)imidazole from N(2)-formyl-N(1)-(5-phospho-D-ribosyl)glycinamide: step 1/2. In terms of biological role, part of the phosphoribosylformylglycinamidine synthase complex involved in the purines biosynthetic pathway. Catalyzes the ATP-dependent conversion of formylglycinamide ribonucleotide (FGAR) and glutamine to yield formylglycinamidine ribonucleotide (FGAM) and glutamate. The FGAM synthase complex is composed of three subunits. PurQ produces an ammonia molecule by converting glutamine to glutamate. PurL transfers the ammonia molecule to FGAR to form FGAM in an ATP-dependent manner. PurS interacts with PurQ and PurL and is thought to assist in the transfer of the ammonia molecule from PurQ to PurL. This is Phosphoribosylformylglycinamidine synthase subunit PurL from Thermosynechococcus vestitus (strain NIES-2133 / IAM M-273 / BP-1).